The primary structure comprises 345 residues: tRNA dimethylallyltransferase (345 aa).

G9–S16 serves as a coordination point for ATP. Position 11 to 16 (T11 to S16) interacts with substrate. 2 interaction with substrate tRNA regions span residues D34–Q37 and Q195–R199.

It belongs to the IPP transferase family. In terms of assembly, monomer. It depends on Mg(2+) as a cofactor.

It catalyses the reaction adenosine(37) in tRNA + dimethylallyl diphosphate = N(6)-dimethylallyladenosine(37) in tRNA + diphosphate. Functionally, catalyzes the transfer of a dimethylallyl group onto the adenine at position 37 in tRNAs that read codons beginning with uridine, leading to the formation of N6-(dimethylallyl)adenosine (i(6)A). The polypeptide is tRNA dimethylallyltransferase (Orientia tsutsugamushi (strain Ikeda) (Rickettsia tsutsugamushi)).